The primary structure comprises 183 residues: MLLLVGLGNPGKRYAETRHNVGFMIIDAVARGFFFPEFCSKHDALVSIGNIGTHRVMLMKPLLYMNRSGTSVLSCTSMHKIAPEHITVFHDDVELQPGTIRVKLGGGSGGHNGLRSIDSAIGKAYWRVRFGVGRAELCNLSDYVLSDFENIAQVTDLVNSVAANLQMLLDGNAAGFVSKVTSV.

Y14 contributes to the tRNA binding site. The active-site Proton acceptor is H19. TRNA-binding residues include Y64, N66, and N112.

This sequence belongs to the PTH family. In terms of assembly, monomer.

The protein localises to the cytoplasm. It carries out the reaction an N-acyl-L-alpha-aminoacyl-tRNA + H2O = an N-acyl-L-amino acid + a tRNA + H(+). Hydrolyzes ribosome-free peptidyl-tRNAs (with 1 or more amino acids incorporated), which drop off the ribosome during protein synthesis, or as a result of ribosome stalling. Its function is as follows. Catalyzes the release of premature peptidyl moieties from peptidyl-tRNA molecules trapped in stalled 50S ribosomal subunits, and thus maintains levels of free tRNAs and 50S ribosomes. The polypeptide is Peptidyl-tRNA hydrolase (Anaplasma phagocytophilum (strain HZ)).